A 344-amino-acid chain; its full sequence is Anthranilate phosphoribosyltransferase (344 aa).

5-phospho-alpha-D-ribose 1-diphosphate is bound by residues Gly-86, 89-90 (GD), Thr-94, 96-99 (NIST), 114-122 (KHGNKSASG), and Ser-126. Position 86 (Gly-86) interacts with anthranilate. Ser-98 is a Mg(2+) binding site. Position 117 (Asn-117) interacts with anthranilate. Residue Arg-172 participates in anthranilate binding. Residues Asp-231 and Glu-232 each contribute to the Mg(2+) site.

It belongs to the anthranilate phosphoribosyltransferase family. In terms of assembly, homodimer. Requires Mg(2+) as cofactor.

The catalysed reaction is N-(5-phospho-beta-D-ribosyl)anthranilate + diphosphate = 5-phospho-alpha-D-ribose 1-diphosphate + anthranilate. The protein operates within amino-acid biosynthesis; L-tryptophan biosynthesis; L-tryptophan from chorismate: step 2/5. Functionally, catalyzes the transfer of the phosphoribosyl group of 5-phosphorylribose-1-pyrophosphate (PRPP) to anthranilate to yield N-(5'-phosphoribosyl)-anthranilate (PRA). The sequence is that of Anthranilate phosphoribosyltransferase from Prochlorococcus marinus (strain MIT 9301).